Here is a 109-residue protein sequence, read N- to C-terminus: Fluoride-specific ion channel FluC (109 aa).

Helical transmembrane passes span 21-41, 52-72, and 84-104; these read LTLNNNFFISIIGSFLVGFFV, ILFSGFFSCFTSFSGFIYFLY, and IIFFNLIIILNLLTMIFGFWI.

The protein belongs to the fluoride channel Fluc/FEX (TC 1.A.43) family.

It is found in the cell inner membrane. It carries out the reaction fluoride(in) = fluoride(out). Functionally, fluoride-specific ion channel. Important for reducing fluoride concentration in the cell, thus reducing its toxicity. The polypeptide is Fluoride-specific ion channel FluC (Prochlorococcus marinus (strain MIT 9301)).